A 473-amino-acid chain; its full sequence is Cell division protein FtsP (473 aa).

The tat-type signal signal peptide spans 1–27 (MSFSRRQFLQASGLAVCLGSLSSSVRA).

The protein belongs to the FtsP family. Post-translationally, predicted to be exported by the Tat system. The position of the signal peptide cleavage has not been experimentally proven.

The protein resides in the periplasm. Functionally, cell division protein that is required for growth during stress conditions. May be involved in protecting or stabilizing the divisomal assembly under conditions of stress. The polypeptide is Cell division protein FtsP (Proteus mirabilis (strain HI4320)).